Here is a 541-residue protein sequence, read N- to C-terminus: Carotenoid-cleaving dioxygenase, mitochondrial (541 aa).

4 residues coordinate Fe cation: His-188, His-248, His-319, and His-535.

This sequence belongs to the carotenoid oxygenase family. The cofactor is Fe(2+). Widely expressed. Detected in heart, spleen, lung, intestine, colon, stomach, kidney, bladder, and prostate. Highly expressed in liver and testis (at protein level).

It is found in the mitochondrion. The catalysed reaction is all-trans-beta-carotene + O2 = beta-ionone + all-trans-10'-apo-beta-carotenal. The enzyme catalyses 5-cis-lycopene + O2 = 5-cis-10'-apo-lycopenal + (3E,5E)-6,10-dimethylundeca-3,5,9-trien-2-one. It carries out the reaction 13-cis-lycopene + O2 = 13-cis-10'-apo-lycopenal + (3E,5E)-6,10-dimethylundeca-3,5,9-trien-2-one. It catalyses the reaction lutein + O2 = (3R,6R)-hydroxy-alpha-ionone + (3R)-3-hydroxy-10'-apo-beta-carotenal. The catalysed reaction is lutein + O2 = (3R,6R)-3-hydroxy-10'-apo-alpha-carotenal + (3R)-hydroxy-beta-ionone. The enzyme catalyses all-trans-zeaxanthin + 2 O2 = 4,9-dimethyldodeca-2,4,6,8,10-pentaenedial + 2 (3R)-hydroxy-beta-ionone. It carries out the reaction all-trans-zeaxanthin + O2 = (3R)-3-hydroxy-10'-apo-beta-carotenal + (3R)-hydroxy-beta-ionone. It catalyses the reaction beta-cryptoxanthin + O2 = all-trans-10'-apo-beta-carotenal + (3R)-hydroxy-beta-ionone. The catalysed reaction is all-trans-10'-apo-beta-carotenal + O2 = beta-ionone + 4,9-dimethyldodeca-2,4,6,8,10-pentaenedial. The enzyme catalyses (3R)-3-hydroxy-10'-apo-beta-carotenal + O2 = 4,9-dimethyldodeca-2,4,6,8,10-pentaenedial + (3R)-hydroxy-beta-ionone. It carries out the reaction (3R,6R)-3-hydroxy-10'-apo-alpha-carotenal + O2 = (3R,6R)-hydroxy-alpha-ionone + 4,9-dimethyldodeca-2,4,6,8,10-pentaenedial. In terms of biological role, broad specificity mitochondrial dioxygenase that mediates the asymmetric oxidative cleavage of carotenoids. Cleaves carotenes (pure hydrocarbon carotenoids) such as all-trans-beta-carotene and lycopene as well as xanthophylls (oxygenated carotenoids) such as zeaxanthin, lutein and beta-cryptoxanthin at both the 9,10 and the 9',10' carbon-carbon double bond. Through its function in carotenoids metabolism regulates oxidative stress and the production of important signaling molecules. The sequence is that of Carotenoid-cleaving dioxygenase, mitochondrial from Mustela putorius furo (European domestic ferret).